The chain runs to 70 residues: DNA gyrase inhibitor YacG (70 aa).

Residues Cys-21, Cys-24, Cys-36, and Cys-40 each contribute to the Zn(2+) site.

The protein belongs to the DNA gyrase inhibitor YacG family. In terms of assembly, interacts with GyrB. Zn(2+) is required as a cofactor.

Its function is as follows. Inhibits all the catalytic activities of DNA gyrase by preventing its interaction with DNA. Acts by binding directly to the C-terminal domain of GyrB, which probably disrupts DNA binding by the gyrase. This is DNA gyrase inhibitor YacG from Rhizobium meliloti (strain 1021) (Ensifer meliloti).